A 658-amino-acid chain; its full sequence is ATP-dependent RNA helicase DDX3Y (658 aa).

Residues 1 to 10 (MSHVVVKNDP) show a composition bias toward basic and acidic residues. The interval 1–141 (MSHVVVKNDP…DDWSKPLPPS (141 aa)) is disordered. S2 carries the post-translational modification N-acetylserine. Polar residues predominate over residues 15–34 (QLANLDLNSEKQSGGASTAS). The span at 44–68 (RNREASKGFHDKDSSGWSCSKDKDA) shows a compositional bias: basic and acidic residues. The residue at position 55 (K55) is an N6-acetyllysine. A phosphoserine mark is found at S81, S85, and S89. A compositionally biased stretch (basic and acidic residues) spans 93–128 (GRFDDRGRSDYDGIGNRDRPGFGRFERSGHSRWCDK). Omega-N-methylarginine is present on R100. Position 101 is a phosphoserine (S101). Y103 carries the phosphotyrosine modification. An Omega-N-methylarginine modification is found at R109. Residues S129 and S181 each carry the phosphoserine modification. The Q motif motif lies at 178–206 (ENFSDIDMGEIIMGNIELTRYTRPTPVQK). 198-205 (YTRPTPVQ) is an ATP binding site. The Helicase ATP-binding domain maps to 209-401 (IPIIKGKRDL…RDFLDEYIFL (193 aa)). Residue K213 forms a Glycyl lysine isopeptide (Lys-Gly) (interchain with G-Cter in SUMO2) linkage. 222-229 (AQTGSGKT) is a binding site for ATP. The DEAD box motif lies at 345-348 (DEAD). The Helicase C-terminal domain maps to 412–573 (NITQKVVWVE…EVPSWLENMA (162 aa)). S454 bears the Phosphoserine mark. R588 carries the post-translational modification Omega-N-methylarginine. Phosphoserine occurs at positions 590 and 601. The tract at residues 597–625 (DYRQSSGSSSSGFGASRGSSSRSGGSGYG) is disordered. Residues 601–619 (SSGSSSSGFGASRGSSSRS) show a composition bias toward low complexity. Omega-N-methylarginine occurs at positions 613 and 628.

This sequence belongs to the DEAD box helicase family. DDX3/DED1 subfamily. As to quaternary structure, may interact with TDRD3.

The protein localises to the cytoplasm. The protein resides in the nucleus. The catalysed reaction is ATP + H2O = ADP + phosphate + H(+). In terms of biological role, probable ATP-dependent RNA helicase. May play a role in spermatogenesis. The polypeptide is ATP-dependent RNA helicase DDX3Y (DDX3Y) (Pongo abelii (Sumatran orangutan)).